The primary structure comprises 399 residues: Tryptophan synthase beta chain (399 aa).

Position 91 is an N6-(pyridoxal phosphate)lysine (K91).

It belongs to the TrpB family. In terms of assembly, tetramer of two alpha and two beta chains. The cofactor is pyridoxal 5'-phosphate.

The catalysed reaction is (1S,2R)-1-C-(indol-3-yl)glycerol 3-phosphate + L-serine = D-glyceraldehyde 3-phosphate + L-tryptophan + H2O. Its pathway is amino-acid biosynthesis; L-tryptophan biosynthesis; L-tryptophan from chorismate: step 5/5. Functionally, the beta subunit is responsible for the synthesis of L-tryptophan from indole and L-serine. The protein is Tryptophan synthase beta chain of Shouchella clausii (strain KSM-K16) (Alkalihalobacillus clausii).